We begin with the raw amino-acid sequence, 136 residues long: Large ribosomal subunit protein uL22 (136 aa).

Belongs to the universal ribosomal protein uL22 family. Part of the 50S ribosomal subunit.

In terms of biological role, this protein binds specifically to 23S rRNA; its binding is stimulated by other ribosomal proteins, e.g. L4, L17, and L20. It is important during the early stages of 50S assembly. It makes multiple contacts with different domains of the 23S rRNA in the assembled 50S subunit and ribosome. Its function is as follows. The globular domain of the protein is located near the polypeptide exit tunnel on the outside of the subunit, while an extended beta-hairpin is found that lines the wall of the exit tunnel in the center of the 70S ribosome. This chain is Large ribosomal subunit protein uL22, found in Bacteroides fragilis (strain YCH46).